The sequence spans 116 residues: NADH-ubiquinone oxidoreductase chain 3 (116 aa).

The next 3 membrane-spanning stretches (helical) occupy residues 3 to 23, 56 to 76, and 87 to 107; these read LITT…TVSF, FFLI…LLPL, and LTLV…IYEW.

It belongs to the complex I subunit 3 family.

It is found in the mitochondrion membrane. It carries out the reaction a ubiquinone + NADH + 5 H(+)(in) = a ubiquinol + NAD(+) + 4 H(+)(out). In terms of biological role, core subunit of the mitochondrial membrane respiratory chain NADH dehydrogenase (Complex I) that is believed to belong to the minimal assembly required for catalysis. Complex I functions in the transfer of electrons from NADH to the respiratory chain. The immediate electron acceptor for the enzyme is believed to be ubiquinone. In Oncorhynchus kisutch (Coho salmon), this protein is NADH-ubiquinone oxidoreductase chain 3 (MT-ND3).